Here is a 548-residue protein sequence, read N- to C-terminus: (S)-beta-macrocarpene synthase (548 aa).

Residues aspartate 302 and aspartate 306 each contribute to the Mg(2+) site. Substrate-binding residues include aspartate 302, aspartate 306, arginine 443, and asparagine 446. The DDXXD motif signature appears at 302–306; it reads DDTLD. Positions 446, 450, and 454 each coordinate Mg(2+).

The protein belongs to the terpene synthase family. Monomer. The cofactor is Mg(2+). Mn(2+) is required as a cofactor. As to expression, expressed in roots. Not detected in leaves, unless damaged by herbivory or infected by fungi.

Its subcellular location is the cytoplasm. It carries out the reaction (S)-beta-bisabolene = (S)-beta-macrocarpene. It catalyses the reaction (2E,6E)-farnesyl diphosphate = (S)-beta-bisabolene + diphosphate. The enzyme catalyses (2E)-geranyl diphosphate = (4S)-limonene + diphosphate. The catalysed reaction is (2E)-geranyl diphosphate = beta-myrcene + diphosphate. It carries out the reaction (2E)-geranyl diphosphate = terpinolene + diphosphate. It catalyses the reaction (2E)-geranyl diphosphate + H2O = (S)-linalool + diphosphate. Its pathway is secondary metabolite biosynthesis; terpenoid biosynthesis. Functionally, involved in the biosynthesis of the bicyclic sesquiterpene (S)-beta-macrocarpene. Can use both geranyl diphosphate and farnesyl diphosphate as substrate, but not geranylgeranyl diphosphate. Produces mainly (S)-beta-macrocarpene, but also smaller amounts of beta-bisabolene and (E)-beta-farnesene when used with farnesyl diphosphate as substrate. In the presence of geranyl diphosphate, produces the acyclic monoterpenes beta-myrcene and linalool along with minor amounts of the cyclic compounds limonene, alpha-thujene, sabinene and alpha-terpinolene. May be involved in plant defense. The polypeptide is (S)-beta-macrocarpene synthase (Zea mays (Maize)).